The following is a 514-amino-acid chain: GMP synthase [glutamine-hydrolyzing] (514 aa).

In terms of domain architecture, Glutamine amidotransferase type-1 spans 9-199 (KIIVLDFGSQ…ALNVCGCKGD (191 aa)). The active-site Nucleophile is the Cys86. Catalysis depends on residues His173 and Glu175. Residues 200 to 389 (WTMENFSEVE…LGMPDAIVWR (190 aa)) enclose the GMPS ATP-PPase domain. 227–233 (SGGVDSS) is an ATP binding site.

Homodimer.

It catalyses the reaction XMP + L-glutamine + ATP + H2O = GMP + L-glutamate + AMP + diphosphate + 2 H(+). Its pathway is purine metabolism; GMP biosynthesis; GMP from XMP (L-Gln route): step 1/1. Catalyzes the synthesis of GMP from XMP. The sequence is that of GMP synthase [glutamine-hydrolyzing] from Listeria monocytogenes serotype 4b (strain F2365).